The sequence spans 99 residues: Aspartyl/glutamyl-tRNA(Asn/Gln) amidotransferase subunit C (99 aa).

It belongs to the GatC family. As to quaternary structure, heterotrimer of A, B and C subunits.

It carries out the reaction L-glutamyl-tRNA(Gln) + L-glutamine + ATP + H2O = L-glutaminyl-tRNA(Gln) + L-glutamate + ADP + phosphate + H(+). The catalysed reaction is L-aspartyl-tRNA(Asn) + L-glutamine + ATP + H2O = L-asparaginyl-tRNA(Asn) + L-glutamate + ADP + phosphate + 2 H(+). Allows the formation of correctly charged Asn-tRNA(Asn) or Gln-tRNA(Gln) through the transamidation of misacylated Asp-tRNA(Asn) or Glu-tRNA(Gln) in organisms which lack either or both of asparaginyl-tRNA or glutaminyl-tRNA synthetases. The reaction takes place in the presence of glutamine and ATP through an activated phospho-Asp-tRNA(Asn) or phospho-Glu-tRNA(Gln). This chain is Aspartyl/glutamyl-tRNA(Asn/Gln) amidotransferase subunit C, found in Mycobacterium leprae (strain Br4923).